Reading from the N-terminus, the 283-residue chain is Bifunctional protein FolD (283 aa).

NADP(+) is bound by residues 165-167 (GRS), S190, and V231.

Belongs to the tetrahydrofolate dehydrogenase/cyclohydrolase family. In terms of assembly, homodimer.

It carries out the reaction (6R)-5,10-methylene-5,6,7,8-tetrahydrofolate + NADP(+) = (6R)-5,10-methenyltetrahydrofolate + NADPH. It catalyses the reaction (6R)-5,10-methenyltetrahydrofolate + H2O = (6R)-10-formyltetrahydrofolate + H(+). It functions in the pathway one-carbon metabolism; tetrahydrofolate interconversion. Catalyzes the oxidation of 5,10-methylenetetrahydrofolate to 5,10-methenyltetrahydrofolate and then the hydrolysis of 5,10-methenyltetrahydrofolate to 10-formyltetrahydrofolate. This Anoxybacillus flavithermus (strain DSM 21510 / WK1) protein is Bifunctional protein FolD.